Reading from the N-terminus, the 342-residue chain is Uroporphyrinogen decarboxylase (342 aa).

Residues 26–30 (RQAGR), Asp76, Tyr150, Ser205, and His321 each bind substrate.

It belongs to the uroporphyrinogen decarboxylase family. As to quaternary structure, homodimer.

Its subcellular location is the cytoplasm. The catalysed reaction is uroporphyrinogen III + 4 H(+) = coproporphyrinogen III + 4 CO2. It participates in porphyrin-containing compound metabolism; protoporphyrin-IX biosynthesis; coproporphyrinogen-III from 5-aminolevulinate: step 4/4. Its function is as follows. Catalyzes the decarboxylation of four acetate groups of uroporphyrinogen-III to yield coproporphyrinogen-III. The sequence is that of Uroporphyrinogen decarboxylase from Sphingopyxis alaskensis (strain DSM 13593 / LMG 18877 / RB2256) (Sphingomonas alaskensis).